An 85-amino-acid chain; its full sequence is Sec-independent protein translocase protein TatA (85 aa).

The chain crosses the membrane as a helical span at residues 1–21 (MGSFSIWHWLIVLLIIMMVFG). Over residues 39 to 51 (FKEGMREGSEDKP) the composition is skewed to basic and acidic residues. The disordered stretch occupies residues 39 to 85 (FKEGMREGSEDKPAGSQQGQQAAGQPPRELHDSTTIDVEARDKSKQG). A compositionally biased stretch (low complexity) spans 52–65 (AGSQQGQQAAGQPP). Basic and acidic residues predominate over residues 66–85 (RELHDSTTIDVEARDKSKQG).

Belongs to the TatA/E family. In terms of assembly, the Tat system comprises two distinct complexes: a TatABC complex, containing multiple copies of TatA, TatB and TatC subunits, and a separate TatA complex, containing only TatA subunits. Substrates initially bind to the TatABC complex, which probably triggers association of the separate TatA complex to form the active translocon.

Its subcellular location is the cell inner membrane. In terms of biological role, part of the twin-arginine translocation (Tat) system that transports large folded proteins containing a characteristic twin-arginine motif in their signal peptide across membranes. TatA could form the protein-conducting channel of the Tat system. This chain is Sec-independent protein translocase protein TatA, found in Ralstonia nicotianae (strain ATCC BAA-1114 / GMI1000) (Ralstonia solanacearum).